Consider the following 356-residue polypeptide: Histidinol-phosphate aminotransferase (356 aa).

Position 214 is an N6-(pyridoxal phosphate)lysine (Lys214).

This sequence belongs to the class-II pyridoxal-phosphate-dependent aminotransferase family. Histidinol-phosphate aminotransferase subfamily. In terms of assembly, homodimer. Pyridoxal 5'-phosphate serves as cofactor.

The catalysed reaction is L-histidinol phosphate + 2-oxoglutarate = 3-(imidazol-4-yl)-2-oxopropyl phosphate + L-glutamate. The protein operates within amino-acid biosynthesis; L-histidine biosynthesis; L-histidine from 5-phospho-alpha-D-ribose 1-diphosphate: step 7/9. The polypeptide is Histidinol-phosphate aminotransferase (Escherichia coli O45:K1 (strain S88 / ExPEC)).